Reading from the N-terminus, the 421-residue chain is Type II methyltransferase M.TaqI (421 aa).

The segment covering 1–18 (MGLPPLLSLPSNSAPRSL) has biased composition (low complexity). Residues 1–20 (MGLPPLLSLPSNSAPRSLGR) are disordered. S-adenosyl-L-methionine is bound by residues Thr23, 45 to 48 (EPAC), Glu71, Asp89, and Pro107.

It belongs to the N(4)/N(6)-methyltransferase family.

The catalysed reaction is a 2'-deoxyadenosine in DNA + S-adenosyl-L-methionine = an N(6)-methyl-2'-deoxyadenosine in DNA + S-adenosyl-L-homocysteine + H(+). In terms of biological role, a gamma subtype methylase that recognizes the double-stranded sequence 5'-TCGA-3', methylates A-4 on both strands and protects the DNA from cleavage by the TaqI endonuclease. The sequence is that of Type II methyltransferase M.TaqI (taqIM) from Thermus aquaticus.